Here is a 912-residue protein sequence, read N- to C-terminus: MSGKGGWAWWWARLPLCLLLSLYGSWVPSSLGKPKGHPHMNSIRIDGDITLGGLFPVHGRGSEGKACGELKKEKGIHRLEAMLFALDRINNDPDLLPNITLGARILDTCSRDTHALEQSLTFVQALIEKDGTEVRCGSGGPPIITKPERVVGVIGASGSSVSIMVANILRLFKIPQISYASTAPDLSDNSRYDFFSRVVPSDTYQAQAMVDIVRALKWNYVSTLASEGSYGESGVEAFIQKSRENGGVCIAQSVKIPREPKTGEFDKIIKRLLETSNARAIIIFANEDDIRRVLEAARRANQTGHFFWMGSDSWGSKSAPVLRLEEVAEGAVTILPKRTSVRGFDRYFSSRTLDNNRRNIWFAEFWEDNFHCKLSRHALKKGSHIKKCTNRERIGQDSAYEQEGKVQFVIDAVYAMGHALHAMHRDLCPGRVGLCPRMDPVDGTQLLKYIRNVNFSGIAGNPVTFNENGDAPGRYDIYQYQRRNGSAEYKVIGSWTDHLHLRIERMQWPGSGQQLPRSICSLPCQPGERKKTVKGMACCWHCEPCTGYQYQVDRYTCKTCPYDMRPTENRTSCQPIPIVKLEWDSPWAVLPLFLAVVGIAATLFVVVTFVRYNDTPIVKASGRELSYVLLAGIFLCYATTFLMIAEPDLGTCSLRRIFLGLGMSISYAALLTKTNRIYRIFEQGKRSVSAPRFISPASQLAITFVLISLQLLCICVWFVVDPSHSVVDFQDQRTLDPRFARGVLKCDISDLSLICLLGYSMLLMVTCTVYAIKTRGVPETFNEAKPIGFTMYTTCIVWLAFIPIFFGTSQSADKLYIQTTTLTVSVSLSASVSLGMLYMPKVYIILFHPEQNVPKRKRSLKAVVTAATMSNKFTQKGNFRPNGEAKSELCENLEAPALATKQTYVTYTNHAI.

The N-terminal stretch at 1-32 is a signal peptide; sequence MSGKGGWAWWWARLPLCLLLSLYGSWVPSSLG. Residues 33 to 586 are Extracellular-facing; that stretch reads KPKGHPHMNS…PIVKLEWDSP (554 aa). Cys67 and Cys109 form a disulfide bridge. Asn98 is a glycosylation site (N-linked (GlcNAc...) asparagine). L-glutamate-binding positions include Ser159, 180-182, and Tyr230; that span reads AST. 7 disulfide bridges follow: Cys249/Cys538, Cys372/Cys388, Cys428/Cys435, Cys520/Cys539, Cys524/Cys542, Cys545/Cys557, and Cys560/Cys573. An N-linked (GlcNAc...) asparagine glycan is attached at Asn301. Residue Asp312 coordinates L-glutamate. Lys405 contributes to the L-glutamate binding site. Residues 587–607 traverse the membrane as a helical segment; sequence WAVLPLFLAVVGIAATLFVVV. Residues 608–624 lie on the Cytoplasmic side of the membrane; it reads TFVRYNDTPIVKASGRE. The chain crosses the membrane as a helical span at residues 625–645; that stretch reads LSYVLLAGIFLCYATTFLMIA. The Extracellular portion of the chain corresponds to 646-653; sequence EPDLGTCS. The chain crosses the membrane as a helical span at residues 654-671; it reads LRRIFLGLGMSISYAALL. The Cytoplasmic segment spans residues 672–699; it reads TKTNRIYRIFEQGKRSVSAPRFISPASQ. The chain crosses the membrane as a helical span at residues 700–720; the sequence is LAITFVLISLQLLCICVWFVV. The Extracellular segment spans residues 721-751; it reads DPSHSVVDFQDQRTLDPRFARGVLKCDISDL. Residues 752–772 traverse the membrane as a helical segment; sequence SLICLLGYSMLLMVTCTVYAI. Residues 773–786 lie on the Cytoplasmic side of the membrane; sequence KTRGVPETFNEAKP. Residues 787-807 traverse the membrane as a helical segment; sequence IGFTMYTTCIVWLAFIPIFFG. Residues 808–826 lie on the Extracellular side of the membrane; the sequence is TSQSADKLYIQTTTLTVSV. A helical transmembrane segment spans residues 827 to 847; sequence SLSASVSLGMLYMPKVYIILF. Topologically, residues 848–912 are cytoplasmic; it reads HPEQNVPKRK…TYVTYTNHAI (65 aa).

The protein belongs to the G-protein coupled receptor 3 family. As to quaternary structure, interacts with PICK1.

It is found in the cell membrane. G-protein coupled receptor for glutamate. Ligand binding causes a conformation change that triggers signaling via guanine nucleotide-binding proteins (G proteins) and modulates the activity of down-stream effectors. Signaling inhibits adenylate cyclase activity. In Mus musculus (Mouse), this protein is Metabotropic glutamate receptor 4 (Grm4).